A 134-amino-acid chain; its full sequence is Cytochrome b5 (134 aa).

N-acetylalanine is present on A2. N6-acetyllysine occurs at positions 7, 10, and 19. The Cytochrome b5 heme-binding domain occupies 9–85 (VKYYTLEEIQ…SKTYIIGELH (77 aa)). Residues H44 and H68 each coordinate heme. A helical membrane pass occupies residues 109–131 (WWTNWVIPAISALVVALMYRLYM).

Belongs to the cytochrome b5 family.

The protein localises to the endoplasmic reticulum membrane. It is found in the microsome membrane. In terms of biological role, cytochrome b5 is a membrane-bound hemoprotein functioning as an electron carrier for several membrane-bound oxygenases. It is also involved in several steps of the sterol biosynthesis pathway, particularly in the C-6 double bond introduction during the C-6 desaturation. This chain is Cytochrome b5 (Cyb5a), found in Rattus norvegicus (Rat).